The chain runs to 105 residues: Signal peptidase complex subunit 1 (105 aa).

Residues 1–32 (MDGMIAMLPAPLQKLSSHIDFQGQKVAERTYQ) are Cytoplasmic-facing. Residues 33 to 53 (VILTIAGIIGFLVGFWTQQLS) form a helical membrane-spanning segment. The Lumenal segment spans residues 54 to 56 (YAM). A helical transmembrane segment spans residues 57–77 (FTVLGASAFTALIILPPWPFL). Topologically, residues 78–105 (FRKNPIVWHTPAEPQESGDKKKETKKTK) are cytoplasmic.

It belongs to the SPCS1 family. In terms of assembly, component of the signal peptidase complex (SPC) composed of a catalytic subunit sec-11 and three accessory subunits spcs-1, spcs-2 and spcs-3. The complex induces a local thinning of the ER membrane which is used to measure the length of the signal peptide (SP) h-region of protein substrates. This ensures the selectivity of the complex towards h-regions shorter than 18-20 amino acids.

Its subcellular location is the endoplasmic reticulum membrane. Its function is as follows. Component of the signal peptidase complex (SPC) which catalyzes the cleavage of N-terminal signal sequences from nascent proteins as they are translocated into the lumen of the endoplasmic reticulum. Dispensable for SPC enzymatic activity. The sequence is that of Signal peptidase complex subunit 1 from Caenorhabditis elegans.